Here is a 292-residue protein sequence, read N- to C-terminus: UPF0696 protein C11orf68 (292 aa).

A compositionally biased stretch (low complexity) spans 1 to 11; sequence MAAAAAAAVAG. Residues 1–60 form a disordered region; the sequence is MAAAAAAAVAGVGRGGGGAEPRQERSRARGWAGVERSEGRRMEPGEELEEEGSPGGREDG. Omega-N-methylarginine is present on Arg29. Residues 35-44 show a composition bias toward basic and acidic residues; it reads ERSEGRRMEP.

It belongs to the UPF0696 family.

This is UPF0696 protein C11orf68 (C11orf68) from Homo sapiens (Human).